Here is a 98-residue protein sequence, read N- to C-terminus: UPF0213 protein LACR_2011 (98 aa).

A GIY-YIG domain is found at 2–79 (NTHFTYVLQC…KLVRQQKLKL (78 aa)).

The protein belongs to the UPF0213 family.

In Lactococcus lactis subsp. cremoris (strain SK11), this protein is UPF0213 protein LACR_2011.